A 284-amino-acid chain; its full sequence is Bifunctional protein FolD (284 aa).

Residues 166-168 (GRS) and Ser191 each bind NADP(+).

This sequence belongs to the tetrahydrofolate dehydrogenase/cyclohydrolase family. As to quaternary structure, homodimer.

The enzyme catalyses (6R)-5,10-methylene-5,6,7,8-tetrahydrofolate + NADP(+) = (6R)-5,10-methenyltetrahydrofolate + NADPH. The catalysed reaction is (6R)-5,10-methenyltetrahydrofolate + H2O = (6R)-10-formyltetrahydrofolate + H(+). The protein operates within one-carbon metabolism; tetrahydrofolate interconversion. Functionally, catalyzes the oxidation of 5,10-methylenetetrahydrofolate to 5,10-methenyltetrahydrofolate and then the hydrolysis of 5,10-methenyltetrahydrofolate to 10-formyltetrahydrofolate. The sequence is that of Bifunctional protein FolD from Leptospira interrogans serogroup Icterohaemorrhagiae serovar copenhageni (strain Fiocruz L1-130).